The primary structure comprises 139 residues: uncharacterized protein (139 aa).

The region spanning 5-114 (IFCKIINKEL…IPRFKNDGFG (110 aa)) is the HIT domain. Residues 99–103 (HTHFH) carry the Histidine triad motif motif.

This is an uncharacterized protein from Borreliella burgdorferi (strain ATCC 35210 / DSM 4680 / CIP 102532 / B31) (Borrelia burgdorferi).